Here is a 580-residue protein sequence, read N- to C-terminus: Formate--tetrahydrofolate ligase (580 aa).

65–72 (TPHGEGKT) contacts ATP.

This sequence belongs to the formate--tetrahydrofolate ligase family.

The enzyme catalyses (6S)-5,6,7,8-tetrahydrofolate + formate + ATP = (6R)-10-formyltetrahydrofolate + ADP + phosphate. It participates in one-carbon metabolism; tetrahydrofolate interconversion. This chain is Formate--tetrahydrofolate ligase, found in Shewanella baltica (strain OS223).